Here is an 862-residue protein sequence, read N- to C-terminus: Valine--tRNA ligase (862 aa).

Residues 43 to 53 (PNVTGSLHMGH) carry the 'HIGH' region motif. Zn(2+) contacts are provided by C176, C179, C344, C347, C417, C420, C438, and C441. A 'KMSKS' region motif is present at residues 528–532 (KMSKS). ATP is bound at residue K531. Residues 802-862 (RRRQEKRLKE…RIREALSQIG (61 aa)) adopt a coiled-coil conformation.

The protein belongs to the class-I aminoacyl-tRNA synthetase family. ValS type 1 subfamily. As to quaternary structure, monomer. It depends on Zn(2+) as a cofactor.

The protein localises to the cytoplasm. The catalysed reaction is tRNA(Val) + L-valine + ATP = L-valyl-tRNA(Val) + AMP + diphosphate. Its function is as follows. Catalyzes the attachment of valine to tRNA(Val). As ValRS can inadvertently accommodate and process structurally similar amino acids such as threonine, to avoid such errors, it has a 'posttransfer' editing activity that hydrolyzes mischarged Thr-tRNA(Val) in a tRNA-dependent manner. The protein is Valine--tRNA ligase of Thermus thermophilus (strain ATCC BAA-163 / DSM 7039 / HB27).